We begin with the raw amino-acid sequence, 275 residues long: NADH-quinone oxidoreductase subunit E 1 (275 aa).

Residues Cys-99, Cys-104, Cys-140, and Cys-144 each coordinate [2Fe-2S] cluster. The segment at 200 to 275 (LQAPEPVEEK…DKSKPAKKPR (76 aa)) is disordered. Residues 206–221 (VEEKKSVRASKAKDEQ) show a composition bias toward basic and acidic residues. The segment covering 231 to 242 (AKPSTATDVTNP) has biased composition (polar residues). Residues 243 to 256 (TLKTPATARKAAAK) are compositionally biased toward low complexity. Over residues 258–269 (VKIEGETVDKSK) the composition is skewed to basic and acidic residues.

Belongs to the complex I 24 kDa subunit family. [2Fe-2S] cluster is required as a cofactor.

The catalysed reaction is a quinone + NADH + 5 H(+)(in) = a quinol + NAD(+) + 4 H(+)(out). NDH-1 shuttles electrons from NADH, via FMN and iron-sulfur (Fe-S) centers, to quinones in the respiratory chain. The immediate electron acceptor for the enzyme in this species is believed to be ubiquinone. Couples the redox reaction to proton translocation (for every two electrons transferred, four hydrogen ions are translocated across the cytoplasmic membrane), and thus conserves the redox energy in a proton gradient. This Rhizobium meliloti (strain 1021) (Ensifer meliloti) protein is NADH-quinone oxidoreductase subunit E 1 (nuoE1).